A 68-amino-acid chain; its full sequence is MKLNEVKEFVKELRGLSQEELAKRENELKKELFELRFQAAAGQLEQTARLKEVKKQIARIKTVQSEVK.

The protein belongs to the universal ribosomal protein uL29 family.

This chain is Large ribosomal subunit protein uL29, found in Streptococcus gordonii (strain Challis / ATCC 35105 / BCRC 15272 / CH1 / DL1 / V288).